A 328-amino-acid polypeptide reads, in one-letter code: tRNA uridine(34) hydroxylase (328 aa).

A Rhodanese domain is found at 130-224 (LDKDTVVLDT…YGKDPEVQGE (95 aa)). Residue Cys-184 is the Cysteine persulfide intermediate of the active site.

This sequence belongs to the TrhO family.

The enzyme catalyses uridine(34) in tRNA + AH2 + O2 = 5-hydroxyuridine(34) in tRNA + A + H2O. Catalyzes oxygen-dependent 5-hydroxyuridine (ho5U) modification at position 34 in tRNAs. This Streptococcus pneumoniae (strain Hungary19A-6) protein is tRNA uridine(34) hydroxylase.